The sequence spans 447 residues: Tubulin beta chain (447 aa).

Glutamine 11, glutamate 69, serine 138, glycine 142, threonine 143, glycine 144, asparagine 204, and asparagine 226 together coordinate GTP. Position 69 (glutamate 69) interacts with Mg(2+). The segment at glutamine 424 to glutamate 447 is disordered. The segment covering glycine 429–glutamate 447 has biased composition (acidic residues).

The protein belongs to the tubulin family. As to quaternary structure, dimer of alpha and beta chains. A typical microtubule is a hollow water-filled tube with an outer diameter of 25 nm and an inner diameter of 15 nM. Alpha-beta heterodimers associate head-to-tail to form protofilaments running lengthwise along the microtubule wall with the beta-tubulin subunit facing the microtubule plus end conferring a structural polarity. Microtubules usually have 13 protofilaments but different protofilament numbers can be found in some organisms and specialized cells. Mg(2+) serves as cofactor.

Its subcellular location is the cytoplasm. It localises to the cytoskeleton. Its function is as follows. Tubulin is the major constituent of microtubules, a cylinder consisting of laterally associated linear protofilaments composed of alpha- and beta-tubulin heterodimers. Microtubules grow by the addition of GTP-tubulin dimers to the microtubule end, where a stabilizing cap forms. Below the cap, tubulin dimers are in GDP-bound state, owing to GTPase activity of alpha-tubulin. This is Tubulin beta chain (tub-2) from Neurospora crassa (strain ATCC 24698 / 74-OR23-1A / CBS 708.71 / DSM 1257 / FGSC 987).